Reading from the N-terminus, the 211-residue chain is Glycerol-3-phosphate acyltransferase (211 aa).

A run of 4 helical transmembrane segments spans residues A5–C25, P80–F100, F112–L132, and G138–F158.

Belongs to the PlsY family. As to quaternary structure, probably interacts with PlsX.

Its subcellular location is the cell inner membrane. It carries out the reaction an acyl phosphate + sn-glycerol 3-phosphate = a 1-acyl-sn-glycero-3-phosphate + phosphate. The protein operates within lipid metabolism; phospholipid metabolism. In terms of biological role, catalyzes the transfer of an acyl group from acyl-phosphate (acyl-PO(4)) to glycerol-3-phosphate (G3P) to form lysophosphatidic acid (LPA). This enzyme utilizes acyl-phosphate as fatty acyl donor, but not acyl-CoA or acyl-ACP. The protein is Glycerol-3-phosphate acyltransferase of Pectobacterium carotovorum subsp. carotovorum (strain PC1).